The sequence spans 114 residues: Ribonuclease P protein component (114 aa).

The protein belongs to the RnpA family. As to quaternary structure, consists of a catalytic RNA component (M1 or rnpB) and a protein subunit.

It carries out the reaction Endonucleolytic cleavage of RNA, removing 5'-extranucleotides from tRNA precursor.. Its function is as follows. RNaseP catalyzes the removal of the 5'-leader sequence from pre-tRNA to produce the mature 5'-terminus. It can also cleave other RNA substrates such as 4.5S RNA. The protein component plays an auxiliary but essential role in vivo by binding to the 5'-leader sequence and broadening the substrate specificity of the ribozyme. The sequence is that of Ribonuclease P protein component from Staphylococcus haemolyticus (strain JCSC1435).